We begin with the raw amino-acid sequence, 487 residues long: MAEIRKLKNYINGEWVESKTDQYEDVINPATKEVMCQVPISTREDVEYAVRSASEAFQTWSKTAVPRRARILFNYQQLLQQNKEELARLITLENGKNTTEALGEVGRGIENVEFAAGAPSLMMGDSLASIATDVEAANYRYPIGVVGGIAPFNFPMMVPCWMFPMAISLGNTFILKPSERTPLLTEKLAELFEQAGLPKGVFNVVHGAHDVVNGVLEHPDIKAISFVGSKPVGEYVFKKGSEHLKRVQALTGAKNHTIVLNDAHLEDTVTNIIGAAFGSAGERCMACAVVTVEEGIADEFMAKLQEKAADIKIGNGLDDGVFLGPVIREDNKKRTHSYIEKGIEEGARLLCDGRENATEDGYFVGPTIFDNVTTDMTIWKDEIFAPVLSVIRVKNLKEAVDIANQSEFANGACLFTSNANAIRYFRENIDAGMLGINLGVPAPMAFFPFSGWKSSFFGTLHANGKDSVDFYTRKKVVTARYPSPDFN.

A150, F152, K176, E179, R180, S229, and T251 together coordinate NAD(+). C284 serves as the catalytic Nucleophile. E382 is a binding site for NAD(+).

Belongs to the aldehyde dehydrogenase family. IolA subfamily. As to quaternary structure, homotetramer.

It catalyses the reaction 3-oxopropanoate + NAD(+) + CoA + H2O = hydrogencarbonate + acetyl-CoA + NADH + H(+). The catalysed reaction is 2-methyl-3-oxopropanoate + NAD(+) + CoA + H2O = propanoyl-CoA + hydrogencarbonate + NADH + H(+). It participates in polyol metabolism; myo-inositol degradation into acetyl-CoA; acetyl-CoA from myo-inositol: step 7/7. In terms of biological role, catalyzes the oxidation of malonate semialdehyde (MSA) and methylmalonate semialdehyde (MMSA) into acetyl-CoA and propanoyl-CoA, respectively. Is involved in a myo-inositol catabolic pathway. Bicarbonate, and not CO2, is the end-product of the enzymatic reaction. This chain is Malonate-semialdehyde dehydrogenase, found in Bacillus velezensis (strain DSM 23117 / BGSC 10A6 / LMG 26770 / FZB42) (Bacillus amyloliquefaciens subsp. plantarum).